We begin with the raw amino-acid sequence, 575 residues long: UvrABC system protein C (575 aa).

A GIY-YIG domain is found at 16 to 94 (SQPGVYRMYD…IKLYQPRYNV (79 aa)). The UVR domain occupies 204-239 (DQVLTQLISRMETASQNLEFEEAARIRDQIQAVRRV).

This sequence belongs to the UvrC family. In terms of assembly, interacts with UvrB in an incision complex.

Its subcellular location is the cytoplasm. In terms of biological role, the UvrABC repair system catalyzes the recognition and processing of DNA lesions. UvrC both incises the 5' and 3' sides of the lesion. The N-terminal half is responsible for the 3' incision and the C-terminal half is responsible for the 5' incision. The sequence is that of UvrABC system protein C from Shigella dysenteriae serotype 1 (strain Sd197).